The chain runs to 393 residues: Chalcone synthase (393 aa).

Residue Cys-164 is part of the active site.

Belongs to the thiolase-like superfamily. Chalcone/stilbene synthases family.

It catalyses the reaction (E)-4-coumaroyl-CoA + 3 malonyl-CoA + 3 H(+) = 2',4,4',6'-tetrahydroxychalcone + 3 CO2 + 4 CoA. It functions in the pathway secondary metabolite biosynthesis; flavonoid biosynthesis. Functionally, the primary product of this enzyme is 4,2',4',6'-tetrahydroxychalcone (also termed naringenin-chalcone or chalcone) which can under specific conditions spontaneously isomerize into naringenin. This Vitis vinifera (Grape) protein is Chalcone synthase (CHS).